Here is a 175-residue protein sequence, read N- to C-terminus: uncharacterized protein (175 aa).

The span at 1–14 (MNTSSRIQLPSSND) shows a compositional bias: polar residues. Disordered regions lie at residues 1 to 31 (MNTS…SKRS) and 127 to 175 (ARSR…QSKR). A compositionally biased stretch (basic and acidic residues) spans 16 to 27 (HVYDGRSNEPKA). Over residues 130–149 (RASSVSNSRLNSRTNSSVSL) the composition is skewed to low complexity. The segment covering 154–175 (GSSSWKNKIKNAVSNVTDQSKR) has biased composition (polar residues).

It localises to the cytoplasm. The protein localises to the nucleus. This is an uncharacterized protein from Schizosaccharomyces pombe (strain 972 / ATCC 24843) (Fission yeast).